We begin with the raw amino-acid sequence, 390 residues long: MAIRRVMHVDLDAFFVSVEQSLRPELKSKPVIVGGKPERRGVVAAASYEARKFGIHSGMPLLSAKHLCPQAVFIEGNHRLYREYSEKFMQILSDFSPFLEPMGLDEAYLEVTGFESLHGSIGEMALKIRRRITAELSINASIGIANSKVVAKIATERAKPNGQCEVPAGEEAAFLAPLDISIMPGIGKKTEYHLKSLGINTLGRLAGIPATFLKIHLGTYAPYLLNAAAGIDNRPVEMPAEAKSISRETTFETDTRNHTFLEAKLGYLSEKIAATLRKRGKQARVVQIKIRFADFTTLTRQKHLNHPCSGNQEIFQTALKLMNGILDSDRRSVRLLGVGISDFCGPEKQLEIDPARARLEKLDASLDKIRQKYGFGSVQTGRTYKLKDLF.

One can recognise a UmuC domain in the interval 6 to 187 (VMHVDLDAFF…LDISIMPGIG (182 aa)). Mg(2+) contacts are provided by aspartate 10 and aspartate 105. Glutamate 106 is an active-site residue.

It belongs to the DNA polymerase type-Y family. Monomer. Mg(2+) is required as a cofactor.

The protein localises to the cytoplasm. It catalyses the reaction DNA(n) + a 2'-deoxyribonucleoside 5'-triphosphate = DNA(n+1) + diphosphate. Functionally, poorly processive, error-prone DNA polymerase involved in untargeted mutagenesis. Copies undamaged DNA at stalled replication forks, which arise in vivo from mismatched or misaligned primer ends. These misaligned primers can be extended by PolIV. Exhibits no 3'-5' exonuclease (proofreading) activity. May be involved in translesional synthesis, in conjunction with the beta clamp from PolIII. The protein is DNA polymerase IV of Dehalococcoides mccartyi (strain ATCC BAA-2266 / KCTC 15142 / 195) (Dehalococcoides ethenogenes (strain 195)).